The following is a 520-amino-acid chain: Cytochrome P450 4F3 (520 aa).

Residues 11 to 31 (LWPMAASPWLLLLLVGASWLL) form a helical membrane-spanning segment. E328 and C468 together coordinate heme.

Belongs to the cytochrome P450 family. Heme serves as cofactor. Selectively expressed in blood neutrophils and bone marrow cells. Coexpressed with CYP4F3B in prostate, ileum and trachea. In terms of tissue distribution, selectively expressed in liver and kidney. It is also the predominant CYP4F isoform in trachea and tissues of the gastrointestinal tract.

It is found in the endoplasmic reticulum membrane. The protein resides in the microsome membrane. The enzyme catalyses an organic molecule + reduced [NADPH--hemoprotein reductase] + O2 = an alcohol + oxidized [NADPH--hemoprotein reductase] + H2O + H(+). It carries out the reaction leukotriene B4 + reduced [NADPH--hemoprotein reductase] + O2 = 20-hydroxy-leukotriene B4 + oxidized [NADPH--hemoprotein reductase] + H2O + H(+). The catalysed reaction is 20-hydroxy-leukotriene B4 + reduced [NADPH--hemoprotein reductase] + O2 = 20-oxo-leukotriene B4 + oxidized [NADPH--hemoprotein reductase] + 2 H2O + H(+). It catalyses the reaction 20-oxo-leukotriene B4 + reduced [NADPH--hemoprotein reductase] + O2 = 20-carboxy-leukotriene B4 + oxidized [NADPH--hemoprotein reductase] + H2O + 2 H(+). The enzyme catalyses (5Z,8Z,11Z)-eicosatrienoate + reduced [NADPH--hemoprotein reductase] + O2 = 20-hydroxy-(5Z,8Z,11Z)-eicosatrienoate + oxidized [NADPH--hemoprotein reductase] + H2O + H(+). It carries out the reaction (5Z,8Z,11Z,14Z)-eicosatetraenoate + reduced [NADPH--hemoprotein reductase] + O2 = 20-hydroxy-(5Z,8Z,11Z,14Z)-eicosatetraenoate + oxidized [NADPH--hemoprotein reductase] + H2O + H(+). The catalysed reaction is (5Z,8Z,11Z,14Z,17Z)-eicosapentaenoate + reduced [NADPH--hemoprotein reductase] + O2 = 19-hydroxy-(5Z,8Z,11Z,14Z,17Z)-eicosapentaenoate + oxidized [NADPH--hemoprotein reductase] + H2O + H(+). It catalyses the reaction (5Z,8Z,11Z,14Z,17Z)-eicosapentaenoate + reduced [NADPH--hemoprotein reductase] + O2 = 20-hydroxy-(5Z,8Z,11Z,14Z,17Z)-eicosapentaenoate + oxidized [NADPH--hemoprotein reductase] + H2O + H(+). The enzyme catalyses (4Z,7Z,10Z,13Z,16Z,19Z)-docosahexaenoate + reduced [NADPH--hemoprotein reductase] + O2 = 21-hydroxy-(4Z,7Z,10Z,13Z,16Z,19Z)-docosahexaenoate + oxidized [NADPH--hemoprotein reductase] + H2O + H(+). It carries out the reaction (4Z,7Z,10Z,13Z,16Z,19Z)-docosahexaenoate + reduced [NADPH--hemoprotein reductase] + O2 = 22-hydroxy-(4Z,7Z,10Z,13Z,16Z,19Z)-docosahexaenoate + oxidized [NADPH--hemoprotein reductase] + H2O + H(+). The catalysed reaction is 8,9-epoxy-(5Z,11Z,14Z)-eicosatrienoate + reduced [NADPH--hemoprotein reductase] + O2 = 20-hydroxy-8,9-epoxy-(5Z,11Z,14Z)-eicosatrienoate + oxidized [NADPH--hemoprotein reductase] + H2O + H(+). It catalyses the reaction 11,12-epoxy-(5Z,8Z,14Z)-eicosatrienoate + reduced [NADPH--hemoprotein reductase] + O2 = 20-hydroxy-11,12-epoxy-(5Z,8Z,14Z)-eicosatrienoate + oxidized [NADPH--hemoprotein reductase] + H2O + H(+). The enzyme catalyses 14,15-epoxy-(5Z,8Z,11Z)-eicosatrienoate + reduced [NADPH--hemoprotein reductase] + O2 = 20-hydroxy-14,15-epoxy-(5Z,8Z,11Z)-eicosatrienoate + oxidized [NADPH--hemoprotein reductase] + H2O + H(+). It carries out the reaction 12,13-epoxy-(9Z)-octadecenoate + reduced [NADPH--hemoprotein reductase] + O2 = 18-hydroxy-12,13-epoxy-(9Z)-octadecenoate + oxidized [NADPH--hemoprotein reductase] + H2O + H(+). The catalysed reaction is 9,10-epoxy-(12Z)-octadecenoate + reduced [NADPH--hemoprotein reductase] + O2 = 18-hydroxy-9,10-epoxy-(12Z)-octadecenoate + oxidized [NADPH--hemoprotein reductase] + H2O + H(+). It catalyses the reaction 9,10-epoxyoctadecanoate + reduced [NADPH--hemoprotein reductase] + O2 = 18-hydroxy-9,10-epoxy-octadecanoate + oxidized [NADPH--hemoprotein reductase] + H2O + H(+). The enzyme catalyses (12R)-hydroxy-(9Z)-octadecenoate + reduced [NADPH--hemoprotein reductase] + O2 = (12R),18-dihydroxy-(9Z)-octadecenoate + oxidized [NADPH--hemoprotein reductase] + H2O + H(+). It carries out the reaction 12-hydroxyoctadecanoate + reduced [NADPH--hemoprotein reductase] + O2 = 12,18-dihydroxyoctadecanoate + oxidized [NADPH--hemoprotein reductase] + H2O + H(+). The catalysed reaction is 5-hydroxy-(6E,8Z,11Z,14Z)-eicosatetraenoate + reduced [NADPH--hemoprotein reductase] + O2 = 5,20-dihydroxy-(6E,8Z,11Z,14Z)-eicosatetraenoate + oxidized [NADPH--hemoprotein reductase] + H2O + H(+). It catalyses the reaction 8-hydroxy-(5Z,9E,11Z,14Z)-eicosatetraenoate + reduced [NADPH--hemoprotein reductase] + O2 = 8,20-dihydroxy-(5Z,9E,11Z,14Z)-eicosatetraenoate + oxidized [NADPH--hemoprotein reductase] + H2O + H(+). The enzyme catalyses 12-hydroxy-(5Z,8Z,10E,14Z)-eicosatetraenoate + reduced [NADPH--hemoprotein reductase] + O2 = 12,20-dihydroxy-(5Z,8Z,10E,14Z)-eicosatetraenoate + oxidized [NADPH--hemoprotein reductase] + H2O + H(+). It carries out the reaction 5-hydroxy-(6E,8Z,11Z,14Z,17Z)-eicosapentaenoate + reduced [NADPH--hemoprotein reductase] + O2 = 5,20-dihydroxy-(6E,8Z,11Z,14Z,17Z)-eicosapentaenoate + oxidized [NADPH--hemoprotein reductase] + H2O + H(+). The catalysed reaction is lipoxin A4 + reduced [NADPH--hemoprotein reductase] + O2 = 20-hydroxy-lipoxin A4 + oxidized [NADPH--hemoprotein reductase] + H2O + H(+). It catalyses the reaction lipoxin B4 + reduced [NADPH--hemoprotein reductase] + O2 = 20-hydroxy-lipoxin B4 + oxidized [NADPH--hemoprotein reductase] + H2O + H(+). The enzyme catalyses 22-hydroxydocosanoate + reduced [NADPH--hemoprotein reductase] + O2 = 22-oxodocosanoate + oxidized [NADPH--hemoprotein reductase] + 2 H2O + H(+). It carries out the reaction 22-oxodocosanoate + reduced [NADPH--hemoprotein reductase] + O2 = docosanedioate + oxidized [NADPH--hemoprotein reductase] + H2O + 2 H(+). The catalysed reaction is docosanoate + reduced [NADPH--hemoprotein reductase] + O2 = 22-hydroxydocosanoate + oxidized [NADPH--hemoprotein reductase] + H2O + H(+). It catalyses the reaction tetracosanoate + reduced [NADPH--hemoprotein reductase] + O2 = 24-hydroxytetracosanoate + oxidized [NADPH--hemoprotein reductase] + H2O + H(+). The enzyme catalyses hexacosanoate + reduced [NADPH--hemoprotein reductase] + O2 = 26-hydroxyhexacosanoate + oxidized [NADPH--hemoprotein reductase] + H2O + H(+). It carries out the reaction 26-hydroxyhexacosanoate + reduced [NADPH--hemoprotein reductase] + O2 = 26-oxohexacosanoate + oxidized [NADPH--hemoprotein reductase] + 2 H2O + H(+). The catalysed reaction is 26-oxohexacosanoate + reduced [NADPH--hemoprotein reductase] + O2 = hexacosanedioate + oxidized [NADPH--hemoprotein reductase] + H2O + 2 H(+). It catalyses the reaction 3-hydroxyoctadecanoate + reduced [NADPH--hemoprotein reductase] + O2 = 3,18-dihydroxyoctadecanoate + oxidized [NADPH--hemoprotein reductase] + H2O + H(+). The enzyme catalyses 3-hydroxyhexadecanoate + reduced [NADPH--hemoprotein reductase] + O2 = 3,16-dihydroxyhexadecanoate + oxidized [NADPH--hemoprotein reductase] + H2O + H(+). It functions in the pathway lipid metabolism; leukotriene B4 degradation. Its pathway is lipid metabolism; arachidonate metabolism. Its activity is regulated as follows. Inhibited by carbon monoxide (CO). A cytochrome P450 monooxygenase involved in the metabolism of various endogenous substrates, including fatty acids and their oxygenated derivatives (oxylipins). Mechanistically, uses molecular oxygen inserting one oxygen atom into a substrate, and reducing the second into a water molecule, with two electrons provided by NADPH via cytochrome P450 reductase (CPR; NADPH-ferrihemoprotein reductase). May play a role in inactivation of pro-inflammatory and anti-inflammatory oxylipins during the resolution of inflammation. Functionally, catalyzes predominantly the oxidation of the terminal carbon (omega-oxidation) of oxylipins in myeloid cells, displaying higher affinity for arachidonate metabolite leukotriene B4 (LTB4). Inactivates LTB4 via three successive oxidative transformations to 20-hydroxy-LTB4, then to 20-oxo-LTB4 and to 20-carboxy-LTB4. Has omega-hydroxylase activity toward long-chain fatty acid epoxides with preference for 8,9-epoxy-(5Z,11Z,14Z)-eicosatrienoate (EET) and 9,10-epoxyoctadecanoate. Omega-hydroxylates monohydroxy polyunsaturated fatty acids (PUFAs), including hydroxyeicosatetraenoates (HETEs) and hydroxyeicosapentaenoates (HEPEs), to dihydroxy compounds. Contributes to the degradation of saturated very long-chain fatty acids (VLCFAs) such as docosanoic acid, by catalyzing successive omega-oxidations to the corresponding dicarboxylic acid, thereby initiating chain shortening. Has low hydroxylase activity toward PUFAs. Its function is as follows. Catalyzes predominantly the oxidation of the terminal carbon (omega-oxidation) of polyunsaturated fatty acids (PUFAs). Participates in the conversion of arachidonic acid to 20-hydroxyeicosatetraenoic acid (20-HETE), a signaling molecule acting both as vasoconstrictive and natriuretic with overall effect on arterial blood pressure. Has high omega-hydroxylase activity toward other PUFAs, including eicosatrienoic acid (ETA), eicosapentaenoic acid (EPA) and docosahexaenoic acid (DHA). Can also catalyze the oxidation of the penultimate carbon (omega-1 oxidation) of PUFAs with lower efficiency. Contributes to the degradation of saturated very long-chain fatty acids (VLCFAs) such as docosanoic acid and hexacosanoic acid, by catalyzing successive omega-oxidations to the corresponding dicarboxylic acids, thereby initiating chain shortening. Omega-hydroxylates long-chain 3-hydroxy fatty acids, likely initiating the oxidative conversion to the corresponding 3-hydroxydicarboxylic fatty acids. Has omega-hydroxylase activity toward long-chain fatty acid epoxides with preference for 8,9-epoxy-(5Z,11Z,14Z)-eicosatrienoate (EET) and 9,10-epoxyoctadecanoate. This is Cytochrome P450 4F3 from Homo sapiens (Human).